Consider the following 149-residue polypeptide: Nucleoside diphosphate kinase (149 aa).

Residues Lys9, Phe57, Arg85, Thr91, Arg102, and Asn112 each coordinate ATP. The Pros-phosphohistidine intermediate role is filled by His115.

This sequence belongs to the NDK family. Homotetramer. The cofactor is Mg(2+).

Its subcellular location is the cytoplasm. The enzyme catalyses a 2'-deoxyribonucleoside 5'-diphosphate + ATP = a 2'-deoxyribonucleoside 5'-triphosphate + ADP. The catalysed reaction is a ribonucleoside 5'-diphosphate + ATP = a ribonucleoside 5'-triphosphate + ADP. Functionally, major role in the synthesis of nucleoside triphosphates other than ATP. The ATP gamma phosphate is transferred to the NDP beta phosphate via a ping-pong mechanism, using a phosphorylated active-site intermediate. In Roseiflexus sp. (strain RS-1), this protein is Nucleoside diphosphate kinase.